Reading from the N-terminus, the 217-residue chain is MKSTVEQAMLFEEKSIFENQAIEQGYSQVAGVDEAGRGPLAGPVVAGACILPRGKVFLGIDDSKKLTPKQRRYLYELLLEDPEVDCGVGVISVERIDEINILEATKEAMVQAIASLRSTPDFLLVDGLFLPHKVPSLKIIKGDARSVSIAAASIIAKEYRDELMRKLHVEYPEYGFDKHKGYGTAAHLQALKHFGPCVYHRKSFSPVKESIQEGVCQ.

One can recognise an RNase H type-2 domain in the interval 27–216 (SQVAGVDEAG…VKESIQEGVC (190 aa)). Residues aspartate 33, glutamate 34, and aspartate 126 each coordinate a divalent metal cation.

Belongs to the RNase HII family. It depends on Mn(2+) as a cofactor. Requires Mg(2+) as cofactor.

It is found in the cytoplasm. It catalyses the reaction Endonucleolytic cleavage to 5'-phosphomonoester.. In terms of biological role, endonuclease that specifically degrades the RNA of RNA-DNA hybrids. The chain is Ribonuclease HII (rnhB) from Chlamydia trachomatis serovar D (strain ATCC VR-885 / DSM 19411 / UW-3/Cx).